A 660-amino-acid polypeptide reads, in one-letter code: MRPRAVLLLLFVLLPMLPAPPAGQPSGRRRGRRSGGAGGGFWGDRVDSQPFALPYIHPTNPFAADVVSQPGAGTRPRQPPRPLGSAWRDQSQRPSAAPRRRSAPAGAAPLTAVSPAPDTAPVPDVDSRGAILRRQYNLSTSPLTSSVASGTNLVLYAAPLNPLLPLQDGTNTHIMATEASNYAQYRVVRATIRYRPLVPNAVGGYAISISFWPQTTTTPTSVDMNSITSTDVRILVQPGIASELVIPSERLHYRNQGWRSVETTGVAEEEATSGLVMLCIHGSPVNSYTNTPYTGALGLLDFALELEFRNLTPGNTNTRVSRYTSTARHRLRRGADGTAELTTTAATRFMKDLHFAGTNGVGEVGRGIALTLFNLADTLLGGLPTELISSAGGQLFYSRPVVSANGEPTVKLYTSVENAQQDKGITIPHDIDLGDSRVVIQDYDNQHEQDRPTPSPAPSRPFSVLRANDVLWLSLTAAEYDQTTYGSSTNPMYVSDTVTLVNVATGAQAVARSLDWSKVTLDGRPLTTIQQYSKTFYVLPLRGKLSFWEAGTTKAGYPYNYNTTASDQILIENAAGHRVAISTYTTSLGAGPTSISAVGVLAPHSALAVLEDTIDYPARAHTFDDFCPECRTLGLQGCAFQSTIAELQRLKMKVGKTRES.

An N-terminal signal peptide occupies residues Met-1–Gly-23. Disordered stretches follow at residues Ala-19 to Gly-43 and Ala-64 to Val-125. Positions Arg-28–Arg-33 match the Nuclear localization signal motif. Residues Arg-93 to Asp-124 are compositionally biased toward low complexity. N-linked (GlcNAc...) asparagine; by host glycans are attached at residues Asn-137 and Asn-310. The segment at Ile-368 to Gln-394 is particle formation. Asn-562 is a glycosylation site (N-linked (GlcNAc...) asparagine; by host). The tract at residues Thr-585–Leu-610 is oligomerization.

The protein belongs to the hepevirus capsid protein family. As to quaternary structure, homodimer. Self-assembles to form the capsid. The capsid is dominated by dimers that define the 30 morphological units. Interacts with phosphorylated protein ORF3. Interacts with host TMEM134. Interacts with host ASGR1 and ASGR2; these interactions facilitate infection of host hepatocytes. Cleaved by host protease in the N-terminus. Post-translationally, N-glycosylated. In terms of processing, not N-glycosylated. The C-terminus of the capsid protein ORF2 is truncated in non-enveloped virions shedded in feces, probably due to host proteases.

The protein resides in the secreted. Its subcellular location is the virion. It is found in the host cytoplasm. It localises to the host endoplasmic reticulum. The protein localises to the host Golgi apparatus. The protein resides in the host cell surface. Its subcellular location is the host nucleus. Plays a role in the inhibition of host antibody-mediated neutralization without blocking viral cell entry. In terms of biological role, forms an icosahedral capsid with a T=1 symmetry and a 34 nm diameter. The capsid is composed of 60 copies linked to each other. Binds to the 5' end of the genomic RNA to mediate genome encapsidation. Binds to heparin surface proteoglycans (HSPGs) to mediate viral entry. Additionally, the interactions with host ASGR1 and ASGR2 facilitate viral infection of hepatocytes. Inhibits IFN production by blocking host TBK1-induced IRF3 phosphorylation. The nuclear form probably modulates host gene expression. The polypeptide is Pro-secreted protein ORF2 (Hepatitis E virus genotype 3 (isolate Human/United States/US2) (HEV-3)).